Consider the following 390-residue polypeptide: Scoulerine-9-O-methyltransferase 1 (390 aa).

Substrate is bound at residue Glu-153. S-adenosyl-L-methionine is bound by residues Met-207, Ser-211, Gly-235, Asp-258, 278–279 (DM), and Lys-292. The active-site Proton acceptor is His-296. 296-297 (HD) is a substrate binding site.

This sequence belongs to the class I-like SAM-binding methyltransferase superfamily. Cation-independent O-methyltransferase family. COMT subfamily. Homodimer. As to expression, highly expressed in capsules. Expressed is stems. Expressed at low levels in roots.

The catalysed reaction is (S)-scoulerine + S-adenosyl-L-methionine = (S)-tetrahydrocolumbamine + S-adenosyl-L-homocysteine + H(+). It catalyses the reaction (S)-tetrahydrocolumbamine + S-adenosyl-L-methionine = (S)-tetrahydropalmatine + S-adenosyl-L-homocysteine + H(+). It carries out the reaction (S)-norreticuline + S-adenosyl-L-methionine = (S)-norcodamine + S-adenosyl-L-homocysteine + H(+). The enzyme catalyses (S)-reticuline + S-adenosyl-L-methionine = (S)-codamine + S-adenosyl-L-homocysteine + H(+). Its pathway is alkaloid biosynthesis. Functionally, methyltransferase involved in the biosynthesis of the benzylisoquinoline alkaloid noscapine. Catalyzes the conversion of (S)-scoulerine to (S)-tetrahydrocolumbamine. Can convert (S)-tetrahydrocolumbamine to tetrahydropalmatine. Can convert (S)-norreticuline to (S)-norcodamine. Can convert (S)-reticuline to (S)-codamine. Substrate preference is (S)-scoulerine &gt; (S)-tetrahydrocolumbamine &gt; (S)-norreticuline &gt; (S)-reticuline. The polypeptide is Scoulerine-9-O-methyltransferase 1 (Papaver somniferum (Opium poppy)).